Consider the following 359-residue polypeptide: Fc receptor-like A (359 aa).

The first 27 residues, Met-1 to Ala-27, serve as a signal peptide directing secretion. Ig-like C2-type domains follow at residues Pro-70–Ser-159 and Pro-170–Glu-257. Disulfide bonds link Cys-99–Cys-143 and Cys-192–Cys-240. The disordered stretch occupies residues Arg-259 to Pro-313. Positions Ser-279–Glu-288 are enriched in low complexity. Positions Ala-289–Pro-299 are enriched in pro residues.

Monomer or homodimer; disulfide-linked. Expressed specifically in primary and secondary lymphoid tissues like lymph node, spleen and tonsil. Specifically expressed in B-cells with a high level in normal germinal center B-cells, centroblasts and in a subset of diffuse large B-cell lymphomas. Highly expressed in bone marrow B-cells and weakly in earlier B lineage cells. Expressed in pre-germinal and germinal center B-cells in secondary lymphoid tissues. Also expressed in melanoma and melanocytes.

It localises to the cytoplasm. Functionally, may be implicated in B-cell differentiation and lymphomagenesis. The chain is Fc receptor-like A (FCRLA) from Homo sapiens (Human).